A 299-amino-acid polypeptide reads, in one-letter code: Putative ankyrin repeat protein R864 (299 aa).

7 ANK repeats span residues 78 to 107, 108 to 137, 139 to 167, 168 to 197, 199 to 227, 228 to 257, and 258 to 287; these read SLNK…NIES, NNNY…NIKS, NNRV…DIRS, NDDY…DIRS, YYYI…DIRA, YNNC…DIRN, and DNDY…DIKT.

This Acanthamoeba polyphaga mimivirus (APMV) protein is Putative ankyrin repeat protein R864.